A 686-amino-acid chain; its full sequence is Solute carrier family 22 member 23 (686 aa).

Disordered stretches follow at residues 1 to 62 (MAID…GGGP) and 169 to 193 (GNRS…DKGD). An N-linked (GlcNAc...) asparagine glycan is attached at Asn-24. Transmembrane regions (helical) follow at residues 234 to 254 (FSLL…ADWV) and 258 to 278 (PVLL…ALSV). Asn-279 carries N-linked (GlcNAc...) asparagine glycosylation. 8 helical membrane passes run 288–308 (FFEG…RIEL), 315–335 (FMIT…MPGL), 344–364 (VLQA…SIFP), 467–487 (ADYY…CVVV), 494–514 (GGLL…LGLL), 538–558 (IAFS…SVFF), 569–589 (CGGL…APII), and 598–618 (FLHH…ILLL).

Belongs to the major facilitator (TC 2.A.1) superfamily. Organic cation transporter (TC 2.A.1.19) family.

Its subcellular location is the membrane. This is Solute carrier family 22 member 23 (SLC22A23) from Homo sapiens (Human).